Reading from the N-terminus, the 805-residue chain is Leucine--tRNA ligase (805 aa).

The short motif at 41-52 (PYPSGAGLHVGH) is the 'HIGH' region element. Residues 577 to 581 (KMSKS) carry the 'KMSKS' region motif. K580 provides a ligand contact to ATP.

This sequence belongs to the class-I aminoacyl-tRNA synthetase family.

It is found in the cytoplasm. It catalyses the reaction tRNA(Leu) + L-leucine + ATP = L-leucyl-tRNA(Leu) + AMP + diphosphate. The polypeptide is Leucine--tRNA ligase (Staphylococcus aureus (strain JH1)).